A 381-amino-acid polypeptide reads, in one-letter code: MYG1 exonuclease (381 aa).

The transit peptide at Met1–Ile47 directs the protein to the mitochondrion. An N6-acetyllysine mark is found at Lys267 and Lys273.

This sequence belongs to the MYG1 family.

The protein resides in the nucleus. It localises to the nucleoplasm. Its subcellular location is the mitochondrion matrix. It is found in the nucleolus. 3'-5' RNA exonuclease which cleaves in situ on specific transcripts in both nucleus and mitochondrion. Involved in regulating spatially segregated organellar RNA processing, acts as a coordinator of nucleo-mitochondrial crosstalk. In nucleolus, processes pre-ribosomal RNA involved in ribosome assembly and alters cytoplasmic translation. In mitochondrial matrix, processes 3'-termini of the mito-ribosomal and messenger RNAs and controls translation of mitochondrial proteins. The polypeptide is MYG1 exonuclease (Rattus norvegicus (Rat)).